The following is a 142-amino-acid chain: Phosphoribosyl-AMP cyclohydrolase (142 aa).

Residue D92 coordinates Mg(2+). C93 is a Zn(2+) binding site. The Mg(2+) site is built by D94 and D96. Residues C109 and C116 each contribute to the Zn(2+) site.

Belongs to the PRA-CH family. Homodimer. It depends on Mg(2+) as a cofactor. Requires Zn(2+) as cofactor.

It localises to the cytoplasm. It catalyses the reaction 1-(5-phospho-beta-D-ribosyl)-5'-AMP + H2O = 1-(5-phospho-beta-D-ribosyl)-5-[(5-phospho-beta-D-ribosylamino)methylideneamino]imidazole-4-carboxamide. Its pathway is amino-acid biosynthesis; L-histidine biosynthesis; L-histidine from 5-phospho-alpha-D-ribose 1-diphosphate: step 3/9. In terms of biological role, catalyzes the hydrolysis of the adenine ring of phosphoribosyl-AMP. The protein is Phosphoribosyl-AMP cyclohydrolase of Alkalilimnicola ehrlichii (strain ATCC BAA-1101 / DSM 17681 / MLHE-1).